The primary structure comprises 426 residues: Putative zinc protease AlbF (426 aa).

Histidine 66 is a Zn(2+) binding site. Glutamate 69 serves as the catalytic Proton acceptor. Positions 70 and 142 each coordinate Zn(2+).

It belongs to the peptidase M16 family. Zn(2+) serves as cofactor.

Required for production of the bacteriocin subtilosin. Could catalyze some step in the processing of presubtilosin. In Bacillus subtilis (strain 168), this protein is Putative zinc protease AlbF (albF).